The primary structure comprises 682 residues: Potassium-transporting ATPase ATP-binding subunit (682 aa).

A run of 4 helical transmembrane segments spans residues 34–54, 62–82, 219–239, and 254–274; these read PVMF…LAMV, ALFT…ANFA, IALT…TATL, and VLVA…LSAI. Asp307 functions as the 4-aspartylphosphate intermediate in the catalytic mechanism. Residues Asp344, Glu348, 377–384, and Lys395 each bind ATP; that span reads FTAQSRMS. Asp518 and Asp522 together coordinate Mg(2+). The next 3 helical transmembrane spans lie at 588–608, 616–636, and 662–682; these read FAII…LNVM, AILS…PLAL, and LVVP…LGLA.

It belongs to the cation transport ATPase (P-type) (TC 3.A.3) family. Type IA subfamily. The system is composed of three essential subunits: KdpA, KdpB and KdpC.

It is found in the cell inner membrane. It catalyses the reaction K(+)(out) + ATP + H2O = K(+)(in) + ADP + phosphate + H(+). Functionally, part of the high-affinity ATP-driven potassium transport (or Kdp) system, which catalyzes the hydrolysis of ATP coupled with the electrogenic transport of potassium into the cytoplasm. This subunit is responsible for energy coupling to the transport system and for the release of the potassium ions to the cytoplasm. The polypeptide is Potassium-transporting ATPase ATP-binding subunit (Salmonella schwarzengrund (strain CVM19633)).